The following is a 154-amino-acid chain: SsrA-binding protein (154 aa).

The disordered stretch occupies residues 130 to 154 (KLHDKRETERRRQDQRDIQRAIKRA). Positions 133-154 (DKRETERRRQDQRDIQRAIKRA) are enriched in basic and acidic residues.

This sequence belongs to the SmpB family.

The protein localises to the cytoplasm. Required for rescue of stalled ribosomes mediated by trans-translation. Binds to transfer-messenger RNA (tmRNA), required for stable association of tmRNA with ribosomes. tmRNA and SmpB together mimic tRNA shape, replacing the anticodon stem-loop with SmpB. tmRNA is encoded by the ssrA gene; the 2 termini fold to resemble tRNA(Ala) and it encodes a 'tag peptide', a short internal open reading frame. During trans-translation Ala-aminoacylated tmRNA acts like a tRNA, entering the A-site of stalled ribosomes, displacing the stalled mRNA. The ribosome then switches to translate the ORF on the tmRNA; the nascent peptide is terminated with the 'tag peptide' encoded by the tmRNA and targeted for degradation. The ribosome is freed to recommence translation, which seems to be the essential function of trans-translation. The chain is SsrA-binding protein from Synechococcus elongatus (strain ATCC 33912 / PCC 7942 / FACHB-805) (Anacystis nidulans R2).